A 497-amino-acid chain; its full sequence is Squalene monooxygenase (497 aa).

Residues 29-30 (VV), 49-50 (ER), R57, R159, V175, D336, and M349 contribute to the FAD site. A run of 2 helical transmembrane segments spans residues 434-454 (FLSGVLPSPYLLTKVFFTVAL) and 467-487 (LGFLLAIYEGFAIIFTAAKVF).

This sequence belongs to the squalene monooxygenase family. FAD is required as a cofactor.

It localises to the microsome membrane. It is found in the endoplasmic reticulum membrane. It catalyses the reaction squalene + reduced [NADPH--hemoprotein reductase] + O2 = (S)-2,3-epoxysqualene + oxidized [NADPH--hemoprotein reductase] + H2O + H(+). It functions in the pathway terpene metabolism; lanosterol biosynthesis; lanosterol from farnesyl diphosphate: step 2/3. In terms of biological role, catalyzes the stereospecific oxidation of squalene to (S)-2,3-epoxysqualene, and is considered to be a rate-limiting enzyme in steroid biosynthesis. This is Squalene monooxygenase (ERG1) from Eremothecium gossypii (strain ATCC 10895 / CBS 109.51 / FGSC 9923 / NRRL Y-1056) (Yeast).